A 474-amino-acid chain; its full sequence is Phenylalanine--tRNA ligase alpha subunit (474 aa).

Residues Thr317, 356 to 358, and Tyr396 contribute to the L-phenylalanine site; that span reads QLE. Residue Glu398 participates in Mg(2+) binding. Phe421 is a binding site for L-phenylalanine.

This sequence belongs to the class-II aminoacyl-tRNA synthetase family. Phe-tRNA synthetase alpha subunit type 2 subfamily. In terms of assembly, tetramer of two alpha and two beta subunits. The cofactor is Mg(2+).

It is found in the cytoplasm. The enzyme catalyses tRNA(Phe) + L-phenylalanine + ATP = L-phenylalanyl-tRNA(Phe) + AMP + diphosphate + H(+). The chain is Phenylalanine--tRNA ligase alpha subunit from Archaeoglobus fulgidus (strain ATCC 49558 / DSM 4304 / JCM 9628 / NBRC 100126 / VC-16).